We begin with the raw amino-acid sequence, 709 residues long: Phosphoribosylformylglycinamidine synthase subunit PurL (709 aa).

Histidine 36 is a catalytic residue. The ATP site is built by tyrosine 39 and lysine 80. Glutamate 82 is a Mg(2+) binding site. Substrate is bound by residues 83 to 86 (SHNH) and arginine 105. The Proton acceptor role is filled by histidine 84. Aspartate 106 serves as a coordination point for Mg(2+). Glutamine 226 provides a ligand contact to substrate. Aspartate 252 contacts Mg(2+). 294–296 (ETQ) serves as a coordination point for substrate. The ATP site is built by aspartate 470 and glycine 507. Serine 510 is a substrate binding site.

It belongs to the FGAMS family. Monomer. Part of the FGAM synthase complex composed of 1 PurL, 1 PurQ and 2 PurS subunits.

Its subcellular location is the cytoplasm. The catalysed reaction is N(2)-formyl-N(1)-(5-phospho-beta-D-ribosyl)glycinamide + L-glutamine + ATP + H2O = 2-formamido-N(1)-(5-O-phospho-beta-D-ribosyl)acetamidine + L-glutamate + ADP + phosphate + H(+). The protein operates within purine metabolism; IMP biosynthesis via de novo pathway; 5-amino-1-(5-phospho-D-ribosyl)imidazole from N(2)-formyl-N(1)-(5-phospho-D-ribosyl)glycinamide: step 1/2. Part of the phosphoribosylformylglycinamidine synthase complex involved in the purines biosynthetic pathway. Catalyzes the ATP-dependent conversion of formylglycinamide ribonucleotide (FGAR) and glutamine to yield formylglycinamidine ribonucleotide (FGAM) and glutamate. The FGAM synthase complex is composed of three subunits. PurQ produces an ammonia molecule by converting glutamine to glutamate. PurL transfers the ammonia molecule to FGAR to form FGAM in an ATP-dependent manner. PurS interacts with PurQ and PurL and is thought to assist in the transfer of the ammonia molecule from PurQ to PurL. In Saccharolobus islandicus (strain M.16.27) (Sulfolobus islandicus), this protein is Phosphoribosylformylglycinamidine synthase subunit PurL.